We begin with the raw amino-acid sequence, 295 residues long: Probable phosphoglycerate mutase PMU1 (295 aa).

Residue His61 is the Tele-phosphohistidine intermediate of the active site. The active-site Proton donor/acceptor is the Glu170.

It belongs to the phosphoglycerate mutase family.

The protein localises to the cytoplasm. Its subcellular location is the nucleus. Its function is as follows. Probable phosphomutase that may have a function related to the manipulation of phosphate groups on carbohydrates. Reduces trehalose-6-phosphate levels when overexpressed in TPS2-deleted cells. Reduces 5'-Phosphoribosyl-4-carboxamide-5-aminoimidazole (AICAR) levels, a metabolic intermediate at the crossroads between AMP and histidine biosynthesis pathways, when overexpressed in a ADE3-ADE16-ADE17 triple deletant. The polypeptide is Probable phosphoglycerate mutase PMU1 (Saccharomyces cerevisiae (strain ATCC 204508 / S288c) (Baker's yeast)).